The following is a 247-amino-acid chain: UPF0280 protein MmarC6_1437 (247 aa).

Belongs to the UPF0280 family.

The protein is UPF0280 protein MmarC6_1437 of Methanococcus maripaludis (strain C6 / ATCC BAA-1332).